We begin with the raw amino-acid sequence, 469 residues long: Probable acetate kinase (469 aa).

Asn-30 is a Mg(2+) binding site. Lys-37 serves as a coordination point for ATP. Arg-122 is a substrate binding site. The active-site Proton donor/acceptor is Asp-179. His-239–Gly-243 is a binding site for ATP. Mg(2+) is bound at residue Glu-453.

This sequence belongs to the acetokinase family. Mg(2+) is required as a cofactor.

The catalysed reaction is acetate + ATP = acetyl phosphate + ADP. It participates in metabolic intermediate biosynthesis; acetyl-CoA biosynthesis; acetyl-CoA from acetate: step 1/2. The sequence is that of Probable acetate kinase from Neurospora crassa (strain ATCC 24698 / 74-OR23-1A / CBS 708.71 / DSM 1257 / FGSC 987).